The primary structure comprises 483 residues: Probable glycosyltransferase 6 (483 aa).

Over 1-40 (MAASETAPFGVSAASKGGGGVAGARAQHGQLAVAGRVHDA) the chain is Cytoplasmic. A helical; Signal-anchor for type II membrane protein membrane pass occupies residues 41–61 (LVFAAGAVAAVLVLLATASFL). Over 62–483 (SPMPVTNLVA…PLPFDYPAAR (422 aa)) the chain is Lumenal. N144 carries N-linked (GlcNAc...) asparagine glycosylation.

The protein belongs to the glycosyltransferase 34 family.

Its subcellular location is the golgi apparatus membrane. Probable glycosyltransferase that may be involved in the biosynthesis of xyloglucan. The sequence is that of Probable glycosyltransferase 6 from Oryza sativa subsp. japonica (Rice).